The primary structure comprises 335 residues: MPFTPLRPGVYAPTMTFFDPSTEDLDVPTIRKHAVRLAKAGLVGLVCMGSNGEAVHLTRAERKTVINETRSALVEAGFSNVPVIAGASEQSIRGTIELCKESYEAGAEYALIVPPSYYRYATGNDQTLYEFFTSVADGSPIPLILYNYPGAVAGIDMDSDLIIRISQHPNIVGTKFTCANTGKLTRVASALHAITPPSPLAPAQRKFPSTKTEANHPYVAFGGIADFSLQTLASGGSAILAGGANVIPKLCVQIFNLWSAGRFTEAMEAQELLSRADWVLTKAAIPGTKSAIQSYYGYGGFPRRPLARLSAEQAEAVAEKIKDAMEVEKSLPDIA.

Position 50–51 (50–51 (SN)) interacts with substrate. Lysine 175 (schiff-base intermediate with substrate) is an active-site residue.

Belongs to the DapA family.

It carries out the reaction 2-dehydro-3-deoxy-L-galactonate = L-glyceraldehyde + pyruvate. It participates in carbohydrate acid metabolism. Mediates the conversion of 2-dehydro-3-deoxy-L-galactonate to pyruvate and L-glyceraldehyde in D-galacturonate catabolic process. This is L-threo-3-deoxy-hexylosonate aldolase (gaaC) from Aspergillus niger.